The following is a 140-amino-acid chain: ATP synthase epsilon chain (140 aa).

The protein belongs to the ATPase epsilon chain family. F-type ATPases have 2 components, CF(1) - the catalytic core - and CF(0) - the membrane proton channel. CF(1) has five subunits: alpha(3), beta(3), gamma(1), delta(1), epsilon(1). CF(0) has three main subunits: a, b and c.

It is found in the cell inner membrane. In terms of biological role, produces ATP from ADP in the presence of a proton gradient across the membrane. In Yersinia enterocolitica serotype O:8 / biotype 1B (strain NCTC 13174 / 8081), this protein is ATP synthase epsilon chain.